We begin with the raw amino-acid sequence, 468 residues long: Cysteine--tRNA ligase (468 aa).

Cysteine 36 contacts Zn(2+). Positions 38-48 match the 'HIGH' region motif; it reads PTVYNRSHIGN. Residues cysteine 216, histidine 241, and glutamate 245 each contribute to the Zn(2+) site. The short motif at 274–278 is the 'KMSKS' region element; sequence KMSKS. Lysine 277 contacts ATP.

It belongs to the class-I aminoacyl-tRNA synthetase family. As to quaternary structure, monomer. Zn(2+) is required as a cofactor.

The protein localises to the cytoplasm. The enzyme catalyses tRNA(Cys) + L-cysteine + ATP = L-cysteinyl-tRNA(Cys) + AMP + diphosphate. This chain is Cysteine--tRNA ligase, found in Parvibaculum lavamentivorans (strain DS-1 / DSM 13023 / NCIMB 13966).